Consider the following 400-residue polypeptide: Phosphoglycerate kinase (400 aa).

Substrate-binding positions include 23 to 25, Arg38, 61 to 64, Arg120, and Arg153; these read DLN and HFGR. Residues Lys203, Glu325, and 355 to 358 each bind ATP; that span reads GGDT.

Belongs to the phosphoglycerate kinase family. As to quaternary structure, monomer.

Its subcellular location is the cytoplasm. It carries out the reaction (2R)-3-phosphoglycerate + ATP = (2R)-3-phospho-glyceroyl phosphate + ADP. The protein operates within carbohydrate degradation; glycolysis; pyruvate from D-glyceraldehyde 3-phosphate: step 2/5. In Methylorubrum populi (strain ATCC BAA-705 / NCIMB 13946 / BJ001) (Methylobacterium populi), this protein is Phosphoglycerate kinase.